Here is a 543-residue protein sequence, read N- to C-terminus: MAKSILFGEESRRAMQAGVDKLANAVKVTLGPKGRNVVLDKKFGSPLITNDGVTIAKEIELEDPYENMGAQLVKEVATKTNDVAGDGTTTATLLAQAIIREGLKNVTAGANPMLIRKGIKLAVDTAVEQIKKSSKQVDGKEDIARVAAISAADPEIGKLIADAMERVGNEGVITVEESNTMATELEVVEGMQFDRGYLSPYMVTDAEKMEAVLENPYILLTDKKISNIQEILPILEQIVQQGKKLLIIAEDIEGEALATLVVNKLRGTFTCVAVKAPGFGDRRKEMLRDIAILTGGEVISEELGREIKDVTLDMLGTAESIKVTKENTTIVNGKGSKAEIEDRIGQIKRQIEETTSEFDKEKLQERLAKIAGGVAVVKVGAATETELKERKLRIEDALAATKAAVEEGIVAGGGTAYLRAIKEVEKLTDNNSEIRLGIAIIRRALEEPVRQIASNAGLEGSVIIDKIMNGQEGMGFDALEGEYVNMVQKGIVDPAKVTRSALQNAASVASTFLTTECVVAEIPEKNPAPQAPGMGGMGMEGMY.

Residues 29-32 (TLGP), 86-90 (DGTTT), Gly-413, 477-479 (DAL), and Asp-493 each bind ATP.

It belongs to the chaperonin (HSP60) family. Forms a cylinder of 14 subunits composed of two heptameric rings stacked back-to-back. Interacts with the co-chaperonin GroES.

It is found in the cytoplasm. It catalyses the reaction ATP + H2O + a folded polypeptide = ADP + phosphate + an unfolded polypeptide.. Together with its co-chaperonin GroES, plays an essential role in assisting protein folding. The GroEL-GroES system forms a nano-cage that allows encapsulation of the non-native substrate proteins and provides a physical environment optimized to promote and accelerate protein folding. This Clostridium botulinum protein is Chaperonin GroEL.